Reading from the N-terminus, the 160-residue chain is Cyanate hydratase (160 aa).

Catalysis depends on residues Arg-100, Glu-103, and Ser-126.

This sequence belongs to the cyanase family.

The catalysed reaction is cyanate + hydrogencarbonate + 3 H(+) = NH4(+) + 2 CO2. Its function is as follows. Catalyzes the reaction of cyanate with bicarbonate to produce ammonia and carbon dioxide. The protein is Cyanate hydratase of Aspergillus flavus (strain ATCC 200026 / FGSC A1120 / IAM 13836 / NRRL 3357 / JCM 12722 / SRRC 167).